A 446-amino-acid polypeptide reads, in one-letter code: Methionine aminopeptidase 2 (446 aa).

Residues 1 to 85 (MAGVTEGEDT…KNKKKKKKKI (85 aa)) are disordered. The segment covering 8–32 (EDTKVIESKINELNIDKPKLEDNNE) has biased composition (basic and acidic residues). Residues 42–58 (SGDDDDDDKEEDDDNEI) are compositionally biased toward acidic residues. The span at 73–85 (KKNKNKKKKKKKI) shows a compositional bias: basic residues. Histidine 197 contributes to the substrate binding site. A divalent metal cation-binding residues include aspartate 217, aspartate 228, and histidine 299. Residue histidine 307 coordinates substrate. Glutamate 332 and glutamate 427 together coordinate a divalent metal cation.

This sequence belongs to the peptidase M24A family. Methionine aminopeptidase eukaryotic type 2 subfamily. Co(2+) serves as cofactor. The cofactor is Zn(2+). Mn(2+) is required as a cofactor. Requires Fe(2+) as cofactor.

Its subcellular location is the cytoplasm. It carries out the reaction Release of N-terminal amino acids, preferentially methionine, from peptides and arylamides.. Cotranslationally removes the N-terminal methionine from nascent proteins. The N-terminal methionine is often cleaved when the second residue in the primary sequence is small and uncharged (Met-Ala-, Cys, Gly, Pro, Ser, Thr, or Val). The polypeptide is Methionine aminopeptidase 2 (Candida albicans (strain SC5314 / ATCC MYA-2876) (Yeast)).